A 140-amino-acid polypeptide reads, in one-letter code: Nucleoside diphosphate kinase (140 aa).

ATP-binding residues include lysine 11, phenylalanine 59, arginine 87, threonine 93, arginine 104, and asparagine 114. The active-site Pros-phosphohistidine intermediate is the histidine 117.

This sequence belongs to the NDK family. Homotetramer. Requires Mg(2+) as cofactor.

The protein localises to the cytoplasm. The catalysed reaction is a 2'-deoxyribonucleoside 5'-diphosphate + ATP = a 2'-deoxyribonucleoside 5'-triphosphate + ADP. It carries out the reaction a ribonucleoside 5'-diphosphate + ATP = a ribonucleoside 5'-triphosphate + ADP. Functionally, major role in the synthesis of nucleoside triphosphates other than ATP. The ATP gamma phosphate is transferred to the NDP beta phosphate via a ping-pong mechanism, using a phosphorylated active-site intermediate. The protein is Nucleoside diphosphate kinase of Gluconobacter oxydans (strain 621H) (Gluconobacter suboxydans).